We begin with the raw amino-acid sequence, 288 residues long: Bifunctional protein FolD 1 (288 aa).

NADP(+) is bound by residues 170 to 172 (GPG) and isoleucine 236.

Belongs to the tetrahydrofolate dehydrogenase/cyclohydrolase family. In terms of assembly, homodimer.

It catalyses the reaction (6R)-5,10-methylene-5,6,7,8-tetrahydrofolate + NADP(+) = (6R)-5,10-methenyltetrahydrofolate + NADPH. The enzyme catalyses (6R)-5,10-methenyltetrahydrofolate + H2O = (6R)-10-formyltetrahydrofolate + H(+). It functions in the pathway one-carbon metabolism; tetrahydrofolate interconversion. Functionally, catalyzes the oxidation of 5,10-methylenetetrahydrofolate to 5,10-methenyltetrahydrofolate and then the hydrolysis of 5,10-methenyltetrahydrofolate to 10-formyltetrahydrofolate. This is Bifunctional protein FolD 1 from Deinococcus geothermalis (strain DSM 11300 / CIP 105573 / AG-3a).